The following is a 935-amino-acid chain: Isoleucine--tRNA ligase (935 aa).

The 'HIGH' region signature appears at 58–68 (PYANGSIHVGH). L-isoleucyl-5'-AMP is bound at residue Glu558. The short motif at 599–603 (KMSKS) is the 'KMSKS' region element. An ATP-binding site is contributed by Lys602. Zn(2+)-binding residues include Cys897, Cys900, Cys917, and Cys920.

This sequence belongs to the class-I aminoacyl-tRNA synthetase family. IleS type 1 subfamily. In terms of assembly, monomer. It depends on Zn(2+) as a cofactor.

Its subcellular location is the cytoplasm. The catalysed reaction is tRNA(Ile) + L-isoleucine + ATP = L-isoleucyl-tRNA(Ile) + AMP + diphosphate. Functionally, catalyzes the attachment of isoleucine to tRNA(Ile). As IleRS can inadvertently accommodate and process structurally similar amino acids such as valine, to avoid such errors it has two additional distinct tRNA(Ile)-dependent editing activities. One activity is designated as 'pretransfer' editing and involves the hydrolysis of activated Val-AMP. The other activity is designated 'posttransfer' editing and involves deacylation of mischarged Val-tRNA(Ile). The sequence is that of Isoleucine--tRNA ligase from Francisella tularensis subsp. tularensis (strain SCHU S4 / Schu 4).